We begin with the raw amino-acid sequence, 257 residues long: Meiotically up-regulated gene 14 protein (257 aa).

Its subcellular location is the cytoplasm. The protein resides in the nucleus. Its function is as follows. Has a role in meiosis. This Schizosaccharomyces pombe (strain 972 / ATCC 24843) (Fission yeast) protein is Meiotically up-regulated gene 14 protein (mug14).